A 720-amino-acid chain; its full sequence is MMNASTKFSDNYDVKEELGKGAFSVVRRCVHKTTGLEFAAKIINTKKLSARDFQKLEREARICRKLQHPNIVRLHDSIQEESFHYLVFDLVTGGELFEDIVAREFYSEADASHCIQQILESIAYCHSNGIVHRDLKPENLLLASKAKGAAVKLADFGLAIEVNDSEAWHGFAGTPGYLSPEVLKKDPYSKPVDIWACGVILYILLVGYPPFWDEDQHRLYAQIKAGAYDYPSPEWDTVTPEAKSLIDSMLTVNPKKRITADQALKVPWICNRERVASAIHRQDTVDCLKKFNARRKLKAAISAVKMVTRMSGVLRTSDSTGSVASNGSTTHDASQVAGTSSQPTSPAAEVYPNVLLFNPQKFPRNCVHPFTTHPYYSPKESSKKKLFFTLLFEVCPHTSRSHILLRDNTKNIYHPYHCFTNKMSNYERAAPSSHGSSTTKKIANAIADLVIRRSSPSIRRKTEADVHNSNRNRKVSAPANLQHALVPVIDVVVATGALASSSVDNLSASTSSDLGRNLLNKKEQGPPSTIKESSESSQTIDDNDSEKGGGQLKHENTVVRADGATGIVSSSNSSTASKSSSTNLSAQKQDIVRVTQTLLDAISCKDFETYTRLCDTSMTCFEPEALGNLIEGIEFHRFYFDGNRKNQVHTTMLNPNVHIIGEDAACVAYVKLTQFLDRNGEAHTRQSQESRVWSKKQGRWVCVHVHRSTQPSTNTTVSEF.

In terms of domain architecture, Protein kinase spans 12 to 269 (YDVKEELGKG…ADQALKVPWI (258 aa)). ATP is bound by residues 18 to 26 (LGKGAFSVV) and lysine 41. Aspartate 134 functions as the Proton acceptor in the catalytic mechanism. Threonine 284 carries the phosphothreonine; by autocatalysis modification. Disordered regions lie at residues 317-345 (SDSTGSVASNGSTTHDASQVAGTSSQPTS) and 504-586 (DNLS…NLSA). Polar residues-rich tracts occupy residues 504–514 (DNLSASTSSDL) and 526–540 (PPSTIKESSESSQTI). Over residues 569-586 (SSSNSSTASKSSSTNLSA) the composition is skewed to low complexity.

The protein belongs to the protein kinase superfamily. CAMK Ser/Thr protein kinase family. CaMK subfamily. As to quaternary structure, dodecamer. Subunits are tightly packed around a central ring-shaped scaffold with extensive contacts between the regulatory segment of one kinase and the catalytic domain of another enabling cooperative activation of a subunit by the adjacent molecule. Interacts with and phosphorylates daf-16; the interaction promotes daf-16 nuclear localization. Interacts with egl-2 and tir-1. Interacts with nsy-1. It depends on Mg(2+) as a cofactor. In terms of tissue distribution, expressed in the nervous system. Observed in the ADF and AWC neurons. Position in AWC neurons is regulated by microtubules. Localized to clusters in ventral cord neurites which appear to be required for glr-1 trafficking. Also present in oocytes.

It localises to the cytoplasm. It is found in the cell projection. The protein resides in the axon. The protein localises to the perikaryon. It catalyses the reaction L-seryl-[protein] + ATP = O-phospho-L-seryl-[protein] + ADP + H(+). It carries out the reaction L-threonyl-[protein] + ATP = O-phospho-L-threonyl-[protein] + ADP + H(+). With respect to regulation, ca2(+)/calmodulin binding removes an autoinhibitory regulatory segment located C-terminal to the kinase domain. This releases the catalytic activity of the enzyme and makes accessible a regulatory residue Thr-284. Phosphorylation of Thr-284 by another kinase domain within the oligomeric holoenzyme keeps CaMKII active in the absence of Ca(2+)/calmodulin by preventing the rebinding of the regulatory segment to the kinase domain and by increasing the affinity of calmodulin for the enzyme. Can respond to high-frequency Ca(2+) pulses to become Ca(2+) independent. Acts in the signaling of a variety of pathways and processes. Phosphorylates 'Ser-319' of daf-16 in response to stress signals, such as heat, starvation and oxidation, which plays a role in prolonging lifespan. Required for viability under chronic osmotic stress in which it acts downstream of osr-1. Has roles in locomotion, oocyte maturation, brood size, egg laying, defecation, meiotic maturation and neuronal cell fate specification. Required for the regulation of synaptic density and neuromuscular junction morphology. Regulates the synaptic trafficking of glr-1. Bidirectional modulator of neurotransmitter release with negative modulatory effects mainly mediated via slo-1 activation. Involved in activation of ADF neurons and increased tph-1 transcription following exposure to pathogenic bacteria which leads to learned olfactory aversion to the bacteria. Implicated in the muscle regulation of spicule protraction. In conjunction with egl-2 has a role in the suppression of mating behavior under food deprivation to encourage foraging. Involved in restricting str-2 expression to only one of the two AWC neurons. May suppress the functional response to an internal pacemaker, perhaps by modulating the activity of the IP3 receptor. The chain is Calcium/calmodulin-dependent protein kinase type II (unc-43) from Caenorhabditis elegans.